Reading from the N-terminus, the 262-residue chain is Protein BREAKING OF ASYMMETRY IN THE STOMATAL LINEAGE (262 aa).

2 disordered regions span residues D32–V107 and K129–S222. Over residues N37 to N47 the composition is skewed to low complexity. 2 short sequence motifs (nuclear localization signal) span residues F50–I57 and K61–K68. A compositionally biased stretch (basic residues) spans K51–E66. A phosphoserine; by ASK7 mark is found at S72, S85, S86, and S87. A compositionally biased stretch (low complexity) spans R84–S95. A Phosphoserine; by ASK7 and MPK6 modification is found at S89. Position 91 is a phosphothreonine; by ASK7 (T91). Residues K129–P146 show a composition bias toward basic and acidic residues. 2 positions are modified to phosphoserine; by MPK6: S145 and S168. Residues N179–D189 show a composition bias toward polar residues. The segment covering V190–E200 has biased composition (basic and acidic residues). Residues S222 to F262 form a required for polarization at the cell cortex region. Residues F223–P226 carry the FxFP, required for cortical polarity formation motif. Phosphoserine; by MPK6 is present on residues S235 and S246.

In terms of assembly, component of a complex made of POLAR, BASL, ASK7/BIN2 and ASK3/SK12. Interacts with POLAR, ASK7/BIN2 and ASK3/SK12. Binds to YDA when phosphorylated. Interacts with MPK6, MPK3 and MKK5. Cortical localization of BASL requires phosphorylation mediated by MPK3 and MPK6. Phosphorylation promotes YDA binding. Phosphorylation status modulates subcellular mobility. Mostly expressed in stomatal lineage cells including asymmetrically dividing meristemoid mother cells (MMCs) and meristemoids, and, at lower levels, in their sisters. Also present in vasculature. Expressed at low levels in the epidermal pavement cells.

It is found in the cytoplasm. Its subcellular location is the nucleus. It localises to the cell cortex. The protein resides in the cell membrane. Functionally, regulates asymmetric cell division (ACD), especially in stomatal-lineage cells, probably by modulating accumulation and subcellular polarization of POLAR and SPCH. Mediates an attenuation of MAPK signaling upon polarization of POLAR and ASK7/BIN2 in stomatal lineage ground cells (SLGCs) undergoing ACD, and relieves BIN2 inhibition of SPCH in the nucleus. When phosphorylated, functions as a scaffold and recruits the MAPKKK YODA, MPK3 and MPK6 to spatially reorganize the MAPK signaling pathway at the cortex of cells undergoing ACD. Cortical polarization leads to elevated nuclear MPK6 signaling and lowered SPCH abundance in one of the two daughter cells, thus differentiating the two daughter cells after ACD. This chain is Protein BREAKING OF ASYMMETRY IN THE STOMATAL LINEAGE, found in Arabidopsis thaliana (Mouse-ear cress).